The primary structure comprises 265 residues: Mlc titration factor A (265 aa).

H111, H148, H152, and E211 together coordinate Zn(2+).

It belongs to the MtfA family. Interacts with Mlc. It depends on Zn(2+) as a cofactor.

Its subcellular location is the cytoplasm. Its function is as follows. Involved in the modulation of the activity of the glucose-phosphotransferase system (glucose-PTS). Interacts with the transcriptional repressor Mlc, preventing its interaction with DNA and leading to the modulation of expression of genes regulated by Mlc, including ptsG, which encodes the PTS system glucose-specific EIICB component. In terms of biological role, shows zinc-dependent metallopeptidase activity. The chain is Mlc titration factor A from Cronobacter sakazakii (strain ATCC BAA-894) (Enterobacter sakazakii).